The sequence spans 361 residues: Cytochrome P450 family protein EryCII (361 aa).

The protein belongs to the cytochrome P450 family. In terms of assembly, heterotetramer composed of EryCII and EryCIII.

It functions in the pathway antibiotic biosynthesis; erythromycin biosynthesis. Its function is as follows. Involved in the erythromycin biosynthesis pathway. Acts by forming a complex and stabilizing the desosaminyl transferase EryCIII. The polypeptide is Cytochrome P450 family protein EryCII (eryCII) (Saccharopolyspora erythraea (strain ATCC 11635 / DSM 40517 / JCM 4748 / NBRC 13426 / NCIMB 8594 / NRRL 2338)).